The primary structure comprises 360 residues: MLLLLAEYLQQFYKGFAVFQYLTLRGILGVLTALSLALCLGPWMIRTLQNRQIGQSVRNDGPQSHLSKSGTPTMGGALILSAIGISTLLWADLRNHYVWVVLLVTLAFGAIGWVDDYRKVIEKNSRGLPSRWKYFWQSVFGLGAAIFLYMTAQSPVETTLLIPMLKDVSIPLGIGFVVLTYFVIVGSSNAVNLTDGLDGLAIMPTVMVGGALGIFCYLSGNVKFAEYLLIPYVPGAGELIVFCGALIGAGLGFLWFNTYPAQVFMGDVGALALGAALGTIAVIVRQEIVLFIMGGVFVMETLSVVIQVASFKLTGRRVFRMAPIHHHFELKGWPEPRVIVRFWIITVILVLIGLATLKLR.

10 consecutive transmembrane segments (helical) span residues Arg25 to Ile45, Thr73 to Leu93, Tyr97 to Tyr117, Trp132 to Ala152, Val168 to Ser188, Gly199 to Ser219, Ala236 to Phe256, Val263 to Ile283, Ile288 to Val308, and Val338 to Lys358.

It belongs to the glycosyltransferase 4 family. MraY subfamily. Requires Mg(2+) as cofactor.

The protein resides in the cell inner membrane. It catalyses the reaction UDP-N-acetyl-alpha-D-muramoyl-L-alanyl-gamma-D-glutamyl-meso-2,6-diaminopimeloyl-D-alanyl-D-alanine + di-trans,octa-cis-undecaprenyl phosphate = di-trans,octa-cis-undecaprenyl diphospho-N-acetyl-alpha-D-muramoyl-L-alanyl-D-glutamyl-meso-2,6-diaminopimeloyl-D-alanyl-D-alanine + UMP. It functions in the pathway cell wall biogenesis; peptidoglycan biosynthesis. Functionally, catalyzes the initial step of the lipid cycle reactions in the biosynthesis of the cell wall peptidoglycan: transfers peptidoglycan precursor phospho-MurNAc-pentapeptide from UDP-MurNAc-pentapeptide onto the lipid carrier undecaprenyl phosphate, yielding undecaprenyl-pyrophosphoryl-MurNAc-pentapeptide, known as lipid I. In Pseudomonas fluorescens (strain ATCC BAA-477 / NRRL B-23932 / Pf-5), this protein is Phospho-N-acetylmuramoyl-pentapeptide-transferase.